Here is a 523-residue protein sequence, read N- to C-terminus: Calcium-dependent protein kinase 1 (523 aa).

Residues Met-1–Glu-36 form a disordered region. Gly-2 carries N-myristoyl glycine lipidation. Cys-3 is lipidated: S-palmitoyl cysteine. Positions Tyr-57 to Ile-324 constitute a Protein kinase domain. ATP contacts are provided by residues Leu-63–Val-71, Lys-86, and Lys-90. Phosphoserine is present on Ser-65. Ser-117 carries the post-translational modification Phosphoserine. Asp-190 serves as the catalytic Proton acceptor. 2 positions are modified to phosphoserine: Ser-216 and Ser-219. Phosphothreonine is present on Thr-230. Ser-334 is subject to Phosphoserine. Positions Asn-345 to Ser-352 match the J domain autoinhibitory motif motif. A j domain region spans residues Asn-345–Ile-363. Residues Gln-353–Ile-363 carry the J domain interacts with the EF-hand domains motif. EF-hand domains are found at residues Glu-371–Phe-406, Asn-415–Leu-450, Phe-451–Ser-486, and Glu-487–His-520. Asp-384, Asn-386, Asp-388, Gln-390, Glu-395, Asp-428, Asp-430, Asn-432, Tyr-434, Glu-439, Asp-464, Asp-466, Ser-468, Lys-470, Glu-475, Asp-498, Asn-500, Asp-502, Met-504, and Glu-509 together coordinate Ca(2+).

The protein belongs to the protein kinase superfamily. Ser/Thr protein kinase family. CDPK subfamily. As to quaternary structure, monomer. Mg(2+) serves as cofactor. Post-translationally, myristoylated. Myristoylation and palmitoylation are required for the localization to the parasitophorous vacuole membrane. Palmitoylated. Palmitoylation increases in merozoites in response to low level of extracellular K(+) in the host blood. Myristoylation and palmitoylation are required for the localization to the parasitophorous vacuole membrane. In terms of processing, phosphorylation at Thr-230 may regulate CDPK1 kinase activity. Phosphorylation increases in response to an increase in intracellular Ca(2+) levels. Autophosphorylated in vitro. Autophosphorylation does not affect membrane localization in vitro.

It is found in the membrane. The protein localises to the cell membrane. The protein resides in the parasitophorous vacuole membrane. It localises to the cytoplasm. Its subcellular location is the cell projection. It is found in the cilium. The protein localises to the flagellum. The protein resides in the host cell membrane. The catalysed reaction is L-seryl-[protein] + ATP = O-phospho-L-seryl-[protein] + ADP + H(+). It carries out the reaction L-threonyl-[protein] + ATP = O-phospho-L-threonyl-[protein] + ADP + H(+). Its activity is regulated as follows. Activated by calcium. Upon calcium binding to the EF-hand domains, the C-terminus of the junction domain (J domain) undergoes a conformational change which results in the dissociation of the pseudo-substrate inhibitory motif from the catalytic domain. This, in turn may facilitate the autophosphorylation of the activation loop at Thr-230, which leads to the kinase activation. Its function is as follows. Calcium-dependent protein kinase which acts as a sensor and effector of intracellular Ca(2+) levels probably in part downstream of cGMP-activated PKG kinase. During the liver stage, involved in sporozoite motility and thus in sporozoite invasion of host hepatocytes, probably together with CDPK4 and CDPK5. In the mosquito midgut and during the last stage of male gamete exflagellation, may play a role in the rupture of the host erythrocyte membrane. In the mosquito midgut, required for the differentiation of the zygote into the ookinete by promoting the translational activation of a subset of repressed mRNAs; these mRNAs are kept repressed in the zygote by the DOZI- or CITH-containing mRNP complexes. Dispensable during the asexual blood stage. The chain is Calcium-dependent protein kinase 1 from Plasmodium berghei (strain Anka).